The following is a 60-amino-acid chain: Large ribosomal subunit protein bL32 (60 aa).

The protein belongs to the bacterial ribosomal protein bL32 family.

This chain is Large ribosomal subunit protein bL32, found in Moorella thermoacetica (strain ATCC 39073 / JCM 9320).